The following is a 127-amino-acid chain: MENERKYSIKVEVRTIYLPDQSDPEAERYVFAYTITINNTGSVASQLVSRHWIITSGDGVTREVRGLGVVGEQPLLKPGETFEYTSGTAISSIAGSMKGSYQMVAEDGFHFSVEIPEFILSVPRVLH.

One can recognise an ApaG domain in the interval 3–127 (NERKYSIKVE…FILSVPRVLH (125 aa)).

The chain is Protein ApaG from Nitrosomonas europaea (strain ATCC 19718 / CIP 103999 / KCTC 2705 / NBRC 14298).